The following is a 304-amino-acid chain: MNIETNTVPQNLDLAQRVEELAAAAETHDGVAPLSEQFLIGLRDDRLGHRHLLAIEGDEVLGVAALDGQTVELFVGVDNRGRGIGKALVDALPASPQIWAHGNLPAAQALAKRNEMDVVRRLLVMAIEGRDLRAAEEAPTTVDGLEIQTYTESVERFGREHVEAEWVRTNNEAFSWHPEQGGWDLERLHRGMEAEWFDPADVLFLWDSHGGAHSAPTMAGFHWLKWHAEDTPAFGEVYVVGLAEDYRGRGLGGPLLTAGLQRMVEKGADKVILYVEADNDPAVKAYERLGFSIAEEHCVWAKSD.

Position 36 (glutamate 36) interacts with 1D-myo-inositol 2-(L-cysteinylamino)-2-deoxy-alpha-D-glucopyranoside. Residue 73–75 (LFV) participates in acetyl-CoA binding. Positions 145–304 (LEIQTYTESV…EEHCVWAKSD (160 aa)) constitute an N-acetyltransferase domain. The 1D-myo-inositol 2-(L-cysteinylamino)-2-deoxy-alpha-D-glucopyranoside site is built by glutamate 179, lysine 225, and glutamate 236. 240-242 (VGL) is an acetyl-CoA binding site. Tyrosine 274 is a 1D-myo-inositol 2-(L-cysteinylamino)-2-deoxy-alpha-D-glucopyranoside binding site. 279–284 (NDPAVK) is an acetyl-CoA binding site.

Belongs to the acetyltransferase family. MshD subfamily. As to quaternary structure, monomer.

It catalyses the reaction 1D-myo-inositol 2-(L-cysteinylamino)-2-deoxy-alpha-D-glucopyranoside + acetyl-CoA = mycothiol + CoA + H(+). Catalyzes the transfer of acetyl from acetyl-CoA to desacetylmycothiol (Cys-GlcN-Ins) to form mycothiol. In Corynebacterium aurimucosum (strain ATCC 700975 / DSM 44827 / CIP 107346 / CN-1) (Corynebacterium nigricans), this protein is Mycothiol acetyltransferase.